The following is a 117-amino-acid chain: MEIGVDIVEIARIRAVYERSGKAFMNKVLTAAEIEQCLAKPDPAVSLAGRFAAKEAISKALGSGIGHKLGWHSIEVLNNEAGKPEVTLHAPHLSYRVSISISHDRHSAVAMALVQPL.

Residues D6 and E55 each contribute to the Mg(2+) site.

It belongs to the P-Pant transferase superfamily. AcpS family. The cofactor is Mg(2+).

It localises to the cytoplasm. The enzyme catalyses apo-[ACP] + CoA = holo-[ACP] + adenosine 3',5'-bisphosphate + H(+). Functionally, transfers the 4'-phosphopantetheine moiety from coenzyme A to a Ser of acyl-carrier-protein. In Chlorobaculum parvum (strain DSM 263 / NCIMB 8327) (Chlorobium vibrioforme subsp. thiosulfatophilum), this protein is Holo-[acyl-carrier-protein] synthase.